We begin with the raw amino-acid sequence, 375 residues long: Succinyl-diaminopimelate desuccinylase (375 aa).

Position 66 (His66) interacts with Zn(2+). The active site involves Asp68. Asp99 is a Zn(2+) binding site. Glu133 serves as the catalytic Proton acceptor. Positions 134, 162, and 348 each coordinate Zn(2+).

This sequence belongs to the peptidase M20A family. DapE subfamily. Homodimer. Zn(2+) is required as a cofactor. The cofactor is Co(2+).

The enzyme catalyses N-succinyl-(2S,6S)-2,6-diaminopimelate + H2O = (2S,6S)-2,6-diaminopimelate + succinate. It functions in the pathway amino-acid biosynthesis; L-lysine biosynthesis via DAP pathway; LL-2,6-diaminopimelate from (S)-tetrahydrodipicolinate (succinylase route): step 3/3. Catalyzes the hydrolysis of N-succinyl-L,L-diaminopimelic acid (SDAP), forming succinate and LL-2,6-diaminopimelate (DAP), an intermediate involved in the bacterial biosynthesis of lysine and meso-diaminopimelic acid, an essential component of bacterial cell walls. The chain is Succinyl-diaminopimelate desuccinylase from Enterobacter sp. (strain 638).